A 163-amino-acid chain; its full sequence is Urease accessory protein UreE (163 aa).

The interval 144-163 is disordered; that stretch reads QPEPGAYGGSSAGSHDGHHH.

It belongs to the UreE family.

Its subcellular location is the cytoplasm. Its function is as follows. Involved in urease metallocenter assembly. Binds nickel. Probably functions as a nickel donor during metallocenter assembly. The polypeptide is Urease accessory protein UreE (Aliivibrio fischeri (strain ATCC 700601 / ES114) (Vibrio fischeri)).